The following is a 1193-amino-acid chain: Protogenin (1193 aa).

A signal peptide spans 1–23; it reads MAPPVRPGMLPLLLLLLLPPLGS. Ig-like domains lie at 24–124, 126–217, 230–317, and 322–406; these read VPGV…AHLT, STIS…ASLT, PTII…ATLT, and PSFV…ARLT. The Extracellular segment spans residues 24–944; that stretch reads VPGVWSFSEL…YYHLDQKSMT (921 aa). Intrachain disulfides connect C54/C107 and C150/C200. N84 is a glycosylation site (N-linked (GlcNAc...) asparagine). An N-linked (GlcNAc...) asparagine glycan is attached at N238. 2 disulfide bridges follow: C251/C299 and C343/C390. Fibronectin type-III domains follow at residues 416-510, 512-608, 613-712, 719-812, and 817-912; these read APYN…TLED, PLRP…TPKA, APKS…VRDR, PPHH…TLPE, and PPVG…VLPK. N-linked (GlcNAc...) asparagine glycosylation is present at N625. A helical membrane pass occupies residues 945–965; that stretch reads GIAVGVGIALTCILICVLILI. Over 966–1193 the chain is Cytoplasmic; that stretch reads YRSKARKSSA…LRHAAESVPV (228 aa). 2 disordered regions span residues 974-1018 and 1078-1193; these read SASK…PMMP and VLIS…SVPV. 2 stretches are compositionally biased toward polar residues: residues 978–990 and 1086–1095; these read TTQS…SRAS and PSSPGQTTSF. The segment covering 1105–1133 has biased composition (basic and acidic residues); the sequence is DTEHSANSEGSHETGDSGRFSHESNDEIH. The span at 1136–1150 shows a compositional bias: polar residues; it reads SVISSTPPTSNSLTC.

The protein belongs to the immunoglobulin superfamily. DCC family.

Its subcellular location is the membrane. Its function is as follows. May play a role in anteroposterior axis elongation. The sequence is that of Protogenin from Rattus norvegicus (Rat).